A 140-amino-acid chain; its full sequence is Large ribosomal subunit protein uL16 (140 aa).

The protein belongs to the universal ribosomal protein uL16 family. In terms of assembly, part of the 50S ribosomal subunit.

Binds 23S rRNA and is also seen to make contacts with the A and possibly P site tRNAs. This chain is Large ribosomal subunit protein uL16, found in Cytophaga hutchinsonii (strain ATCC 33406 / DSM 1761 / CIP 103989 / NBRC 15051 / NCIMB 9469 / D465).